A 496-amino-acid chain; its full sequence is RNA-binding motif protein, Y chromosome, family 1 member F/J (496 aa).

Residues 8–85 (GKLFIGGLNR…KAIKVEQAKK (78 aa)) form the RRM domain. Disordered regions lie at residues 81–345 (EQAK…YAPP) and 452–496 (KDQR…SSRY). Low complexity-rich tracts occupy residues 97-114 (PASS…SARG) and 149-159 (PVKRGPSSRSG). Residues 175 to 184 (NSWMGSQGPM) show a composition bias toward polar residues. 6 stretches are compositionally biased toward basic and acidic residues: residues 204-214 (RNDRMSTRHDG), 242-253 (DNGHSNRDEHSS), 276-289 (AYRD…DESY), 313-326 (GYRD…HESY), 335-345 (SSRETRDYAPP), and 484-496 (GESR…SSRY).

As to quaternary structure, interacts with splicing factor proteins SFRS3/SRP20, TRA2B/SFRS10, KHDRBS1/SAM68 and KHDRBS3. In terms of tissue distribution, testis-specific.

Its subcellular location is the nucleus. RNA-binding protein which may be involved in spermatogenesis. Required for sperm development, possibly by participating in pre-mRNA splicing in the testis. In Homo sapiens (Human), this protein is RNA-binding motif protein, Y chromosome, family 1 member F/J (RBMY1F).